Here is a 226-residue protein sequence, read N- to C-terminus: Adenosine 5'-phosphosulfate reductase (226 aa).

[4Fe-4S] cluster is bound by residues Cys-112, Cys-113, Cys-195, and Cys-198. The active-site Nucleophile; cysteine thiosulfonate intermediate is Cys-221.

This sequence belongs to the PAPS reductase family. CysH subfamily. The cofactor is [4Fe-4S] cluster.

It localises to the cytoplasm. The catalysed reaction is [thioredoxin]-disulfide + sulfite + AMP + 2 H(+) = adenosine 5'-phosphosulfate + [thioredoxin]-dithiol. It participates in sulfur metabolism; hydrogen sulfide biosynthesis; sulfite from sulfate. Catalyzes the formation of sulfite from adenosine 5'-phosphosulfate (APS) using thioredoxin as an electron donor. The sequence is that of Adenosine 5'-phosphosulfate reductase from Bacillus anthracis (strain A0248).